The following is a 403-amino-acid chain: Stearoyl-[acyl-carrier-protein] 9-desaturase 4, chloroplastic (403 aa).

The transit peptide at 1-44 (MALLLNSTMTVAMKQNPATAVSFMQTTCLGSSFSPPRHLQVSCV) directs the protein to the chloroplast. E140, E178, H181, E231, E264, and H267 together coordinate Fe cation.

This sequence belongs to the fatty acid desaturase type 2 family. Homodimer. Fe(2+) is required as a cofactor. As to expression, preferentially expressed in roots.

The protein localises to the plastid. It localises to the chloroplast. The catalysed reaction is octadecanoyl-[ACP] + 2 reduced [2Fe-2S]-[ferredoxin] + O2 + 2 H(+) = (9Z)-octadecenoyl-[ACP] + 2 oxidized [2Fe-2S]-[ferredoxin] + 2 H2O. It functions in the pathway lipid metabolism; fatty acid metabolism. In terms of biological role, converts stearoyl-ACP to oleoyl-ACP by introduction of a cis double bond between carbons 9 and 10 of the acyl chain. In Arabidopsis thaliana (Mouse-ear cress), this protein is Stearoyl-[acyl-carrier-protein] 9-desaturase 4, chloroplastic (S-ACP-DES4).